The following is a 178-amino-acid chain: Cytochrome b6-f complex iron-sulfur subunit (178 aa).

The helical transmembrane segment at 20–42 (LLTFGSVTGVALGALYPVVNYFI) threads the bilayer. Residues 71-161 (THPAGDRSLV…VSVENDNVFV (91 aa)) form the Rieske domain. Residues cysteine 107, histidine 109, cysteine 125, and histidine 128 each contribute to the [2Fe-2S] cluster site. Cysteines 112 and 127 form a disulfide.

The protein belongs to the Rieske iron-sulfur protein family. The 4 large subunits of the cytochrome b6-f complex are cytochrome b6, subunit IV (17 kDa polypeptide, PetD), cytochrome f and the Rieske protein, while the 4 small subunits are PetG, PetL, PetM and PetN. The complex functions as a dimer. Requires [2Fe-2S] cluster as cofactor.

Its subcellular location is the cellular thylakoid membrane. The enzyme catalyses 2 oxidized [plastocyanin] + a plastoquinol + 2 H(+)(in) = 2 reduced [plastocyanin] + a plastoquinone + 4 H(+)(out). Component of the cytochrome b6-f complex, which mediates electron transfer between photosystem II (PSII) and photosystem I (PSI), cyclic electron flow around PSI, and state transitions. The polypeptide is Cytochrome b6-f complex iron-sulfur subunit (Synechococcus sp. (strain WH7803)).